Consider the following 88-residue polypeptide: Eclosion hormone (88 aa).

The first 26 residues, 1 to 26, serve as a signal peptide directing secretion; it reads MANKLTAVIVVALAVAFMVNLDYANC. Intrachain disulfides connect Cys40-Cys64, Cys44-Cys60, and Cys47-Cys75.

The protein belongs to the insect eclosion hormone family.

Its subcellular location is the secreted. Neuropeptide that triggers the performance of ecdysis behaviors at the end of a molt. It triggers adult behavior patterns: larval, pupal and adult ecdysis, and plasticization during the molt. The sequence is that of Eclosion hormone from Bombyx mori (Silk moth).